A 377-amino-acid polypeptide reads, in one-letter code: NADH dehydrogenase [ubiquinone] 1 alpha subcomplex subunit 9, mitochondrial (377 aa).

The transit peptide at 1–35 (MAAAVRFQVVRALPMSRPAISAAATSVFCSSSHRQ) directs the protein to the mitochondrion. Lysine 175 bears the N6-succinyllysine mark. 2 positions are modified to N6-acetyllysine: lysine 189 and lysine 370.

It belongs to the complex I NDUFA9 subunit family. As to quaternary structure, complex I is composed of 45 different subunits. This a component of the hydrophobic protein fraction. Interacts with BLOC1S1. Interacts with SLC2A4. Interacts with CLOCK. Interacts with RAB5IF. FAD is required as a cofactor. Post-translationally, acetylated on lysine residues. BLOC1S1 is required for acetylation. Acetylated by CLOCK in a circadian manner. In terms of tissue distribution, expressed by the principal cells of the epididymis. Detected in flagella of epididymal sperm (at protein level).

Its subcellular location is the mitochondrion matrix. Accessory subunit of the mitochondrial membrane respiratory chain NADH dehydrogenase (Complex I), that is believed not to be involved in catalysis. Complex I functions in the transfer of electrons from NADH to the respiratory chain. The immediate electron acceptor for the enzyme is believed to be ubiquinone. This is NADH dehydrogenase [ubiquinone] 1 alpha subcomplex subunit 9, mitochondrial from Rattus norvegicus (Rat).